Consider the following 143-residue polypeptide: Monothiol glutaredoxin-5, mitochondrial (143 aa).

A mitochondrion-targeting transit peptide spans 1–28; sequence MFGRISTRALLRPAFTHRIPSVSLSRFL. Positions 33–138 constitute a Glutaredoxin domain; it reads KQAIESAIES…KLLEDADALV (106 aa). A glutathione-binding site is contributed by lysine 50. Cysteine 58 contributes to the [2Fe-2S] cluster binding site. Glutathione contacts are provided by residues 90–94, isoleucine 102, and 115–116; these read REGVK and CD.

Belongs to the glutaredoxin family. Monothiol subfamily. As to quaternary structure, homodimer.

It localises to the mitochondrion matrix. Monothiol glutaredoxin involved in mitochondrial iron-sulfur (Fe/S) cluster transfer. Receives iron-sulfur clusters from scaffold protein ISU1 and mediates their transfer to apoproteins, to the 4Fe/FS cluster biosynthesis machinery, or export from mitochondrion. This is Monothiol glutaredoxin-5, mitochondrial (GRX5) from Lachancea kluyveri (Yeast).